The sequence spans 141 residues: Large ribosomal subunit protein uL11 (141 aa).

The protein belongs to the universal ribosomal protein uL11 family. In terms of assembly, part of the ribosomal stalk of the 50S ribosomal subunit. Interacts with L10 and the large rRNA to form the base of the stalk. L10 forms an elongated spine to which L12 dimers bind in a sequential fashion forming a multimeric L10(L12)X complex. In terms of processing, one or more lysine residues are methylated.

Its function is as follows. Forms part of the ribosomal stalk which helps the ribosome interact with GTP-bound translation factors. This chain is Large ribosomal subunit protein uL11, found in Carboxydothermus hydrogenoformans (strain ATCC BAA-161 / DSM 6008 / Z-2901).